Consider the following 256-residue polypeptide: uncharacterized protein (256 aa).

Residues 187 to 223 (MEEEEISEVEDALNVLQRLCAQEEGDNKEAETNNNNY) are a coiled coil.

This is an uncharacterized protein from Ostreid herpesvirus 1 (isolate France) (OsHV-1).